Consider the following 348-residue polypeptide: Holliday junction branch migration complex subunit RuvB (348 aa).

Residues 1 to 182 (MRIELLNTPA…FGINSRFDYY (182 aa)) form a large ATPase domain (RuvB-L) region. Residues isoleucine 21, arginine 22, glycine 63, lysine 66, threonine 67, threonine 68, 129–131 (EDF), arginine 172, tyrosine 182, and arginine 219 each bind ATP. Position 67 (threonine 67) interacts with Mg(2+). The interval 183–253 (SADLLEKIII…IAMTTLDCLE (71 aa)) is small ATPAse domain (RuvB-S). Residues 256-348 (EEGLDDMDKK…EFPLEDDQRQ (93 aa)) form a head domain (RuvB-H) region. Residues arginine 311 and arginine 316 each contribute to the DNA site.

The protein belongs to the RuvB family. In terms of assembly, homohexamer. Forms an RuvA(8)-RuvB(12)-Holliday junction (HJ) complex. HJ DNA is sandwiched between 2 RuvA tetramers; dsDNA enters through RuvA and exits via RuvB. An RuvB hexamer assembles on each DNA strand where it exits the tetramer. Each RuvB hexamer is contacted by two RuvA subunits (via domain III) on 2 adjacent RuvB subunits; this complex drives branch migration. In the full resolvosome a probable DNA-RuvA(4)-RuvB(12)-RuvC(2) complex forms which resolves the HJ.

Its subcellular location is the cytoplasm. The catalysed reaction is ATP + H2O = ADP + phosphate + H(+). The RuvA-RuvB-RuvC complex processes Holliday junction (HJ) DNA during genetic recombination and DNA repair, while the RuvA-RuvB complex plays an important role in the rescue of blocked DNA replication forks via replication fork reversal (RFR). RuvA specifically binds to HJ cruciform DNA, conferring on it an open structure. The RuvB hexamer acts as an ATP-dependent pump, pulling dsDNA into and through the RuvAB complex. RuvB forms 2 homohexamers on either side of HJ DNA bound by 1 or 2 RuvA tetramers; 4 subunits per hexamer contact DNA at a time. Coordinated motions by a converter formed by DNA-disengaged RuvB subunits stimulates ATP hydrolysis and nucleotide exchange. Immobilization of the converter enables RuvB to convert the ATP-contained energy into a lever motion, pulling 2 nucleotides of DNA out of the RuvA tetramer per ATP hydrolyzed, thus driving DNA branch migration. The RuvB motors rotate together with the DNA substrate, which together with the progressing nucleotide cycle form the mechanistic basis for DNA recombination by continuous HJ branch migration. Branch migration allows RuvC to scan DNA until it finds its consensus sequence, where it cleaves and resolves cruciform DNA. This Chlorobium limicola (strain DSM 245 / NBRC 103803 / 6330) protein is Holliday junction branch migration complex subunit RuvB.